Consider the following 312-residue polypeptide: Type II methyltransferase M.NgoMIV (312 aa).

Positions F3 to E311 constitute an SAM-dependent MTase C5-type domain. The active site involves C74.

Belongs to the class I-like SAM-binding methyltransferase superfamily. C5-methyltransferase family.

It catalyses the reaction a 2'-deoxycytidine in DNA + S-adenosyl-L-methionine = a 5-methyl-2'-deoxycytidine in DNA + S-adenosyl-L-homocysteine + H(+). Its function is as follows. A methylase, recognizes the double-stranded sequence 5'-GCCGGC-3', methylates C-2 on both strands, and protects the DNA from cleavage by the NgoMIV endonuclease. The sequence is that of Type II methyltransferase M.NgoMIV (ngoMIVM) from Neisseria gonorrhoeae.